We begin with the raw amino-acid sequence, 506 residues long: Tyrosine-protein kinase isoform SRK4 (506 aa).

2 stretches are compositionally biased toward polar residues: residues 1 to 10 (MGSCCSSQDG) and 18 to 31 (AGSTVDSHELSQSV). The segment at 1-53 (MGSCCSSQDGDGNGKATAGSTVDSHELSQSVKGKIKQPEPKPKPPPQVPPAQD) is disordered. The SH3 domain occupies 54–116 (VKYPIYVGKY…PSNYVAEYKS (63 aa)). Residues 122-214 (WFFGQVKRVD…GLCVNLKGPC (93 aa)) form the SH2 domain. In terms of domain architecture, Protein kinase spans 240 to 493 (IKLLRGLGAG…TLSWQLEEFF (254 aa)). Residues 246-254 (LGAGQFGEV) and Lys268 contribute to the ATP site. Asp359 functions as the Proton acceptor in the catalytic mechanism.

Belongs to the protein kinase superfamily. Tyr protein kinase family.

It is found in the cytoplasm. The enzyme catalyses L-tyrosyl-[protein] + ATP = O-phospho-L-tyrosyl-[protein] + ADP + H(+). This chain is Tyrosine-protein kinase isoform SRK4 (SRK1), found in Spongilla lacustris (Freshwater sponge).